Reading from the N-terminus, the 378-residue chain is Protein RecA (378 aa).

79-86 (GPESSGKT) serves as a coordination point for ATP.

This sequence belongs to the RecA family.

The protein resides in the cytoplasm. In terms of biological role, can catalyze the hydrolysis of ATP in the presence of single-stranded DNA, the ATP-dependent uptake of single-stranded DNA by duplex DNA, and the ATP-dependent hybridization of homologous single-stranded DNAs. It interacts with LexA causing its activation and leading to its autocatalytic cleavage. This chain is Protein RecA, found in Streptococcus pyogenes serotype M49 (strain NZ131).